Consider the following 164-residue polypeptide: Nitric oxide synthase, inducible (164 aa).

Phenylalanine 3 serves as a coordination point for (6R)-L-erythro-5,6,7,8-tetrahydrobiopterin. Heme b is bound at residue tyrosine 18. Residues phenylalanine 42–lysine 62 form a calmodulin-binding region. In terms of domain architecture, Flavodoxin-like spans cysteine 66–phenylalanine 164. 9 residues coordinate FMN: threonine 72, glutamate 73, threonine 74, lysine 76, serine 77, serine 118, threonine 119, serine 155, and cysteine 162.

Belongs to the NOS family. Homodimer. Requires heme b as cofactor. The cofactor is FAD. It depends on FMN as a cofactor. (6R)-L-erythro-5,6,7,8-tetrahydrobiopterin is required as a cofactor.

Its subcellular location is the cytoplasm. The protein localises to the cytosol. The catalysed reaction is 2 L-arginine + 3 NADPH + 4 O2 + H(+) = 2 L-citrulline + 2 nitric oxide + 3 NADP(+) + 4 H2O. Not stimulated by calcium/calmodulin. In terms of biological role, produces nitric oxide (NO) which is a messenger molecule with diverse functions throughout the body. In macrophages, NO mediates tumoricidal and bactericidal actions. Also has nitrosylase activity and mediates cysteine S-nitrosylation of cytoplasmic target proteins such COX2. In Carassius auratus (Goldfish), this protein is Nitric oxide synthase, inducible (nos2).